Here is a 333-residue protein sequence, read N- to C-terminus: Tetraacyldisaccharide 4'-kinase (333 aa).

Residue S55–T62 participates in ATP binding.

It belongs to the LpxK family.

The catalysed reaction is a lipid A disaccharide + ATP = a lipid IVA + ADP + H(+). It participates in glycolipid biosynthesis; lipid IV(A) biosynthesis; lipid IV(A) from (3R)-3-hydroxytetradecanoyl-[acyl-carrier-protein] and UDP-N-acetyl-alpha-D-glucosamine: step 6/6. Functionally, transfers the gamma-phosphate of ATP to the 4'-position of a tetraacyldisaccharide 1-phosphate intermediate (termed DS-1-P) to form tetraacyldisaccharide 1,4'-bis-phosphate (lipid IVA). In Aeromonas hydrophila subsp. hydrophila (strain ATCC 7966 / DSM 30187 / BCRC 13018 / CCUG 14551 / JCM 1027 / KCTC 2358 / NCIMB 9240 / NCTC 8049), this protein is Tetraacyldisaccharide 4'-kinase.